A 112-amino-acid polypeptide reads, in one-letter code: Large ribosomal subunit protein bL20c (112 aa).

The protein belongs to the bacterial ribosomal protein bL20 family.

It is found in the plastid. The protein resides in the chloroplast. Functionally, binds directly to 23S ribosomal RNA and is necessary for the in vitro assembly process of the 50S ribosomal subunit. It is not involved in the protein synthesizing functions of that subunit. This is Large ribosomal subunit protein bL20c (rpl20) from Chlamydomonas reinhardtii (Chlamydomonas smithii).